The sequence spans 449 residues: Glucose-6-phosphate isomerase (449 aa).

The active-site Proton donor is the E291. Residues H312 and K426 contribute to the active site.

This sequence belongs to the GPI family.

It localises to the cytoplasm. It catalyses the reaction alpha-D-glucose 6-phosphate = beta-D-fructose 6-phosphate. Its pathway is carbohydrate biosynthesis; gluconeogenesis. It participates in carbohydrate degradation; glycolysis; D-glyceraldehyde 3-phosphate and glycerone phosphate from D-glucose: step 2/4. In terms of biological role, catalyzes the reversible isomerization of glucose-6-phosphate to fructose-6-phosphate. The sequence is that of Glucose-6-phosphate isomerase from Pediococcus pentosaceus (strain ATCC 25745 / CCUG 21536 / LMG 10740 / 183-1w).